The primary structure comprises 506 residues: Hexokinase-6 (506 aa).

Residues 6 to 26 form a helical membrane-spanning segment; it reads VVGTAVVVCAAAAAAVGVAVV. In terms of domain architecture, Hexokinase spans 43-497; the sequence is RRAAAVIEEV…SGIGAALLAA (455 aa). The interval 98-236 is hexokinase small subdomain; it reads TGDEHGLFYA…GLDMKVTALV (139 aa). The ADP site is built by Gly112, Thr113, and Asn114. Residues Thr202, Lys203, Asn237, and Asp238 each contribute to the D-glucose site. The tract at residues 237-486 is hexokinase large subdomain; sequence NDTVGTLAGG…SSVVVKLAND (250 aa). Thr261 lines the ADP pocket. Residues Asn264, Glu292, and Glu323 each contribute to the D-glucose site. Gly451 contacts ADP.

Belongs to the hexokinase family. As to expression, expressed in roots, leaves, flowers, immature seeds and endosperm.

The protein resides in the plastid. The protein localises to the chloroplast outer membrane. It carries out the reaction a D-hexose + ATP = a D-hexose 6-phosphate + ADP + H(+). The catalysed reaction is D-fructose + ATP = D-fructose 6-phosphate + ADP + H(+). It catalyses the reaction D-glucose + ATP = D-glucose 6-phosphate + ADP + H(+). The protein operates within carbohydrate metabolism; hexose metabolism. It functions in the pathway carbohydrate degradation; glycolysis; D-glyceraldehyde 3-phosphate and glycerone phosphate from D-glucose: step 1/4. Fructose and glucose phosphorylating enzyme. Functions as a glucose sensor for plant growth and photosynthesis. The polypeptide is Hexokinase-6 (HXK6) (Oryza sativa subsp. japonica (Rice)).